The following is a 258-amino-acid chain: Terpene cyclase macJ (258 aa).

Transmembrane regions (helical) follow at residues 29–49 (VPDG…ILMA), 58–78 (YAMP…YGFV), 83–103 (LLNQ…FYAI), 124–144 (IIVV…ATFI), 151–171 (VVFM…IAQL), 181–201 (SWGI…CFFW), and 220–240 (FLLL…VYVQ).

This sequence belongs to the paxB family.

The protein localises to the membrane. It functions in the pathway secondary metabolite biosynthesis; terpenoid biosynthesis. Functionally, terpene cyclase; part of the gene cluster that mediates the biosynthesis of macrophorins, isoprenoid epoxycyclohexenones containing cyclized drimane moieties. The first step of the pathway is the synthesis of 6-methylsalicylic acid (6-MSA) by the polyketide synthase macA. 6-MSA is then converted to m-cresol by the decarboxylase macB. The cytochrome P450 monooxygenase macC then catalyzes the oxidation of m-cresol to toluquinol. Epoxidation of toluquinol is then performed by the short chain dehydrogenase macD, with the help of macE, and a further prenylation by macG leads to 7-deacetoxyyanuthone A. The next step is the hydroxylation of C-22 of 7-deacetoxyyanuthone A by the cytochrome P450 monooxygenase macH to yield 22-deacetylyanuthone A. O-Mevalon transferase macI then attaches mevalon to the hydroxyl group of 22-deacetylyanuthone A to produce yanuthone E. The terpene cyclase macJ catalyzes the cyclization of 22-deacetylyanuthone A to macrophorin A. MacJ is also able to catalyze cyclization of yanuthone E and 7-deacetoxyyanuthone A to their corresponding macrophorins. The macJ products can be further modified by macH and macJ, as well as by the FAD-dependent monooxygenase macF, to produce additional macrophorins, including 4'-oxomacrophorin A, 4'-oxomacrophorin D and 4'-oxomacrophorin E. This Penicillium terrestre protein is Terpene cyclase macJ.